The following is a 301-amino-acid chain: Phosphatidylserine decarboxylase proenzyme (301 aa).

Active-site charge relay system; for autoendoproteolytic cleavage activity residues include D117, H173, and S260. The Schiff-base intermediate with substrate; via pyruvic acid; for decarboxylase activity role is filled by S260. Position 260 is a pyruvic acid (Ser); by autocatalysis (S260).

It belongs to the phosphatidylserine decarboxylase family. PSD-B subfamily. Prokaryotic type II sub-subfamily. As to quaternary structure, heterodimer of a large membrane-associated beta subunit and a small pyruvoyl-containing alpha subunit. Pyruvate is required as a cofactor. In terms of processing, is synthesized initially as an inactive proenzyme. Formation of the active enzyme involves a self-maturation process in which the active site pyruvoyl group is generated from an internal serine residue via an autocatalytic post-translational modification. Two non-identical subunits are generated from the proenzyme in this reaction, and the pyruvate is formed at the N-terminus of the alpha chain, which is derived from the carboxyl end of the proenzyme. The autoendoproteolytic cleavage occurs by a canonical serine protease mechanism, in which the side chain hydroxyl group of the serine supplies its oxygen atom to form the C-terminus of the beta chain, while the remainder of the serine residue undergoes an oxidative deamination to produce ammonia and the pyruvoyl prosthetic group on the alpha chain. During this reaction, the Ser that is part of the protease active site of the proenzyme becomes the pyruvoyl prosthetic group, which constitutes an essential element of the active site of the mature decarboxylase.

It localises to the cell membrane. It catalyses the reaction a 1,2-diacyl-sn-glycero-3-phospho-L-serine + H(+) = a 1,2-diacyl-sn-glycero-3-phosphoethanolamine + CO2. It participates in phospholipid metabolism; phosphatidylethanolamine biosynthesis; phosphatidylethanolamine from CDP-diacylglycerol: step 2/2. In terms of biological role, catalyzes the formation of phosphatidylethanolamine (PtdEtn) from phosphatidylserine (PtdSer). The sequence is that of Phosphatidylserine decarboxylase proenzyme from Chlamydia muridarum (strain MoPn / Nigg).